The sequence spans 132 residues: MGLIVYYSSATGNTEYFVSQLGQRLFKIDKKKPSVLVDEPYVLVVPTYADGEGRMAVPKVVIRFLNECENRKLIRGVIGGGNRNFGCYYNLASKIIAEKCFVPCLYRFELRGTNEDVICVKKGLERFWKQLV.

It belongs to the NrdI family.

Probably involved in ribonucleotide reductase function. This Bartonella quintana (strain Toulouse) (Rochalimaea quintana) protein is Protein NrdI.